The primary structure comprises 368 residues: Mitogen-activated protein kinase HOG1B (368 aa).

A Protein kinase domain is found at 20–299 (YVNLEPVGMG…ASQALAHPYL (280 aa)). ATP is bound by residues 26–34 (VGMGAFGLV) and Lys-49. The active-site Proton acceptor is Asp-141. The residue at position 171 (Thr-171) is a Phosphothreonine. Positions 171-173 (TGY) match the TXY motif. Phosphotyrosine is present on Tyr-173.

It belongs to the protein kinase superfamily. Ser/Thr protein kinase family. MAP kinase subfamily. HOG1 sub-subfamily. Mg(2+) serves as cofactor. Phosphorylated. Dually phosphorylated on Thr-171 and Tyr-173, which activates the enzyme. Rapidly dephosphorylated upon either hypo- or hyperosmotic shock.

It localises to the cytoplasm. The protein resides in the nucleus. It carries out the reaction L-seryl-[protein] + ATP = O-phospho-L-seryl-[protein] + ADP + H(+). The enzyme catalyses L-threonyl-[protein] + ATP = O-phospho-L-threonyl-[protein] + ADP + H(+). Its activity is regulated as follows. Activated by tyrosine and threonine phosphorylation. Mitogen-activated protein kinase involved in a signal transduction pathway that is activated by changes in the osmolarity of the extracellular environment. Controls osmotic regulation of transcription of target genes. This chain is Mitogen-activated protein kinase HOG1B (HOG1B), found in Wallemia ichthyophaga (strain EXF-994 / CBS 113033).